The sequence spans 435 residues: Homoserine dehydrogenase (435 aa).

NADPH-binding residues include Thr-13, Val-14, Arg-43, and Lys-105. Val-14 is an NAD(+) binding site. Residues Val-14, Arg-43, and Lys-105 each contribute to the NADP(+) site. Residues Glu-129, Val-132, Gly-134, and Ile-136 each contribute to the Na(+) site. Lys-204 functions as the Proton donor in the catalytic mechanism. 2 disordered regions span residues 255–274 (ARGV…TPDR) and 377–402 (RCDD…PDHV). Composition is skewed to basic and acidic residues over residues 262 to 274 (RAPD…TPDR) and 377 to 391 (RCDD…AERR).

It belongs to the homoserine dehydrogenase family. Requires a metal cation as cofactor.

The enzyme catalyses L-homoserine + NADP(+) = L-aspartate 4-semialdehyde + NADPH + H(+). It carries out the reaction L-homoserine + NAD(+) = L-aspartate 4-semialdehyde + NADH + H(+). The protein operates within amino-acid biosynthesis; L-methionine biosynthesis via de novo pathway; L-homoserine from L-aspartate: step 3/3. It functions in the pathway amino-acid biosynthesis; L-threonine biosynthesis; L-threonine from L-aspartate: step 3/5. Functionally, catalyzes the conversion of L-aspartate-beta-semialdehyde (L-Asa) to L-homoserine (L-Hse), the third step in the biosynthesis of threonine and methionine from aspartate. This chain is Homoserine dehydrogenase (hom), found in Methylobacillus glycogenes.